A 512-amino-acid chain; its full sequence is Cytochrome P450 1A1 (512 aa).

The tract at residues 29 to 40 (SRPRVPKGLKNP) is mitochondrial targeting signal. O-linked (GlcNAc) serine glycosylation occurs at Ser67. Substrate is bound at residue Phe224. Cys457 contributes to the heme binding site.

This sequence belongs to the cytochrome P450 family. Interacts with cytosolic chaperones HSP70 and HSP90; this interaction is required for initial targeting to mitochondria. Interacts (via mitochondrial targeting signal) with TOMM40 (via N-terminus); this interaction is required for translocation across the mitochondrial outer membrane. Requires heme as cofactor.

The protein resides in the endoplasmic reticulum membrane. The protein localises to the mitochondrion inner membrane. It localises to the microsome membrane. Its subcellular location is the cytoplasm. It catalyses the reaction an organic molecule + reduced [NADPH--hemoprotein reductase] + O2 = an alcohol + oxidized [NADPH--hemoprotein reductase] + H2O + H(+). The catalysed reaction is estrone + reduced [NADPH--hemoprotein reductase] + O2 = 2-hydroxyestrone + oxidized [NADPH--hemoprotein reductase] + H2O + H(+). The enzyme catalyses estrone + reduced [NADPH--hemoprotein reductase] + O2 = 4-hydroxyestrone + oxidized [NADPH--hemoprotein reductase] + H2O + H(+). It carries out the reaction estrone + reduced [NADPH--hemoprotein reductase] + O2 = 6alpha-hydroxyestrone + oxidized [NADPH--hemoprotein reductase] + H2O + H(+). It catalyses the reaction estrone + reduced [NADPH--hemoprotein reductase] + O2 = 15alpha-hydroxyestrone + oxidized [NADPH--hemoprotein reductase] + H2O + H(+). The catalysed reaction is estrone + reduced [NADPH--hemoprotein reductase] + O2 = 16alpha-hydroxyestrone + oxidized [NADPH--hemoprotein reductase] + H2O + H(+). The enzyme catalyses 17beta-estradiol + reduced [NADPH--hemoprotein reductase] + O2 = 2-hydroxy-17beta-estradiol + oxidized [NADPH--hemoprotein reductase] + H2O + H(+). It carries out the reaction 17beta-estradiol + reduced [NADPH--hemoprotein reductase] + O2 = 4-hydroxy-17beta-estradiol + oxidized [NADPH--hemoprotein reductase] + H2O + H(+). It catalyses the reaction 17beta-estradiol + reduced [NADPH--hemoprotein reductase] + O2 = 6alpha-hydroxy-17beta-estradiol + oxidized [NADPH--hemoprotein reductase] + H2O + H(+). The catalysed reaction is 17beta-estradiol + reduced [NADPH--hemoprotein reductase] + O2 = 7alpha-hydroxy-17beta-estradiol + oxidized [NADPH--hemoprotein reductase] + H2O + H(+). The enzyme catalyses 17beta-estradiol + reduced [NADPH--hemoprotein reductase] + O2 = 15alpha-hydroxy-17beta-estradiol + oxidized [NADPH--hemoprotein reductase] + H2O + H(+). It carries out the reaction (5Z,8Z,11Z)-eicosatrienoate + reduced [NADPH--hemoprotein reductase] + O2 = 19-hydroxy-(5Z,8Z,11Z)-eicosatrienoate + oxidized [NADPH--hemoprotein reductase] + H2O + H(+). It catalyses the reaction (5Z,8Z,11Z,14Z)-eicosatetraenoate + reduced [NADPH--hemoprotein reductase] + O2 = 16-hydroxy-(5Z,8Z,11Z,14Z)-eicosatetraenoate + oxidized [NADPH--hemoprotein reductase] + H2O + H(+). The catalysed reaction is (5Z,8Z,11Z,14Z)-eicosatetraenoate + reduced [NADPH--hemoprotein reductase] + O2 = 17-hydroxy-(5Z,8Z,11Z,14Z)-eicosatetraenoate + oxidized [NADPH--hemoprotein reductase] + H2O + H(+). The enzyme catalyses (5Z,8Z,11Z,14Z)-eicosatetraenoate + reduced [NADPH--hemoprotein reductase] + O2 = 18-hydroxy-(5Z,8Z,11Z,14Z)-eicosatetraenoate + oxidized [NADPH--hemoprotein reductase] + H2O + H(+). It carries out the reaction (5Z,8Z,11Z,14Z)-eicosatetraenoate + reduced [NADPH--hemoprotein reductase] + O2 = 19-hydroxy-(5Z,8Z,11Z,14Z)-eicosatetraenoate + oxidized [NADPH--hemoprotein reductase] + H2O + H(+). It catalyses the reaction (5Z,8Z,11Z,14Z,17Z)-eicosapentaenoate + reduced [NADPH--hemoprotein reductase] + O2 = 19-hydroxy-(5Z,8Z,11Z,14Z,17Z)-eicosapentaenoate + oxidized [NADPH--hemoprotein reductase] + H2O + H(+). The catalysed reaction is (5Z,8Z,11Z,14Z)-eicosatetraenoate + reduced [NADPH--hemoprotein reductase] + O2 = (8R,9S)-epoxy-(5Z,11Z,14Z)-eicosatrienoate + oxidized [NADPH--hemoprotein reductase] + H2O + H(+). The enzyme catalyses (5Z,8Z,11Z,14Z)-eicosatetraenoate + reduced [NADPH--hemoprotein reductase] + O2 = (11R,12S)-epoxy-(5Z,8Z,14Z)-eicosatrienoate + oxidized [NADPH--hemoprotein reductase] + H2O + H(+). It carries out the reaction (5Z,8Z,11Z,14Z)-eicosatetraenoate + reduced [NADPH--hemoprotein reductase] + O2 = (14S,15R)-epoxy-(5Z,8Z,11Z)-eicosatrienoate + oxidized [NADPH--hemoprotein reductase] + H2O + H(+). It catalyses the reaction (5Z,8Z,11Z,14Z)-eicosatetraenoate + reduced [NADPH--hemoprotein reductase] + O2 = (14R,15S)-epoxy-(5Z,8Z,11Z)-eicosatrienoate + oxidized [NADPH--hemoprotein reductase] + H2O + H(+). The catalysed reaction is (5Z,8Z,11Z,14Z,17Z)-eicosapentaenoate + reduced [NADPH--hemoprotein reductase] + O2 = (17R,18S)-epoxy-(5Z,8Z,11Z,14Z)-eicosatetraenoate + oxidized [NADPH--hemoprotein reductase] + H2O + H(+). The enzyme catalyses (4Z,7Z,10Z,13Z,16Z,19Z)-docosahexaenoate + reduced [NADPH--hemoprotein reductase] + O2 = (19S,20R)-epoxy-(4Z,7Z,10Z,13Z,16Z)-docosapentaenoate + oxidized [NADPH--hemoprotein reductase] + H2O + H(+). It carries out the reaction (4Z,7Z,10Z,13Z,16Z,19Z)-docosahexaenoate + reduced [NADPH--hemoprotein reductase] + O2 = (19R,20S)-epoxy-(4Z,7Z,10Z,13Z,16Z)-docosapentaenoate + oxidized [NADPH--hemoprotein reductase] + H2O + H(+). It catalyses the reaction all-trans-retinol + reduced [NADPH--hemoprotein reductase] + O2 = all-trans-retinal + oxidized [NADPH--hemoprotein reductase] + 2 H2O + H(+). The catalysed reaction is all-trans-retinal + reduced [NADPH--hemoprotein reductase] + O2 = all-trans-retinoate + oxidized [NADPH--hemoprotein reductase] + H2O + 2 H(+). The enzyme catalyses (13S)-hydroperoxy-(9Z,11E)-octadecadienoate = 13-oxo-(9Z,11E)-octadecadienoate + H2O. It carries out the reaction (12S)-hydroperoxy-(5Z,8Z,10E,14Z)-eicosatetraenoate = 12-oxo-(5Z,8Z,10E,14Z)-eicosatetraenoate + H2O. It catalyses the reaction (15S)-hydroperoxy-(5Z,8Z,11Z,13E)-eicosatetraenoate = 15-oxo-(5Z,8Z,11Z,13E)-eicosatetraenoate + H2O. The catalysed reaction is (5S)-hydroperoxy-(6E,8Z,11Z,14Z)-eicosatetraenoate = 5-oxo-(6E,8Z,11Z,14Z)-eicosatetraenoate + H2O. It functions in the pathway steroid hormone biosynthesis. It participates in lipid metabolism; fatty acid metabolism. Its pathway is cofactor metabolism; retinol metabolism. In terms of biological role, a cytochrome P450 monooxygenase involved in the metabolism of various endogenous substrates, including fatty acids, steroid hormones and vitamins. Mechanistically, uses molecular oxygen inserting one oxygen atom into a substrate, and reducing the second into a water molecule, with two electrons provided by NADPH via cytochrome P450 reductase (CPR; NADPH-ferrihemoprotein reductase). Catalyzes the hydroxylation of carbon-hydrogen bonds. Exhibits high catalytic activity for the formation of hydroxyestrogens from estrone (E1) and 17beta-estradiol (E2), namely 2-hydroxy E1 and E2, as well as D-ring hydroxylated E1 and E2 at the C15alpha and C16alpha positions. Displays different regioselectivities for polyunsaturated fatty acids (PUFA) hydroxylation. Catalyzes the epoxidation of double bonds of certain PUFA. Converts arachidonic acid toward epoxyeicosatrienoic acid (EET) regioisomers, 8,9-, 11,12-, and 14,15-EET, that function as lipid mediators in the vascular system. Displays an absolute stereoselectivity in the epoxidation of eicosapentaenoic acid (EPA) producing the 17(R),18(S) enantiomer. May play an important role in all-trans retinoic acid biosynthesis in extrahepatic tissues. Catalyzes two successive oxidative transformation of all-trans retinol to all-trans retinal and then to the active form all-trans retinoic acid. May also participate in eicosanoids metabolism by converting hydroperoxide species into oxo metabolites (lipoxygenase-like reaction, NADPH-independent). The protein is Cytochrome P450 1A1 (CYP1A1) of Macaca fascicularis (Crab-eating macaque).